Here is a 30-residue protein sequence, read N- to C-terminus: LIM and SH3 domain protein 1 (30 aa).

Met1 carries the N-acetylmethionine modification. The LIM zinc-binding domain maps to Cys5–Phe30.

As to quaternary structure, interacts with F-actin. Interacts with ANKRD54. Interacts with KBTBD10. In terms of processing, phosphorylated.

It is found in the cytoplasm. Its subcellular location is the cell cortex. It localises to the cytoskeleton. Plays an important role in the regulation of dynamic actin-based, cytoskeletal activities. Agonist-dependent changes in LASP1 phosphorylation may also serve to regulate actin-associated ion transport activities, not only in the parietal cell but also in certain other F-actin-rich secretory epithelial cell types. The chain is LIM and SH3 domain protein 1 (LASP1) from Sus scrofa (Pig).